The following is a 623-amino-acid chain: Chaperone protein HtpG (623 aa).

Positions 1 to 326 (MAEEKRQFQA…SQDLPLNVSR (326 aa)) are a; substrate-binding. A b region spans residues 327–543 (EMLQHNPVLS…EGEMSMHLEK (217 aa)). Residues 544–623 (MLRAHNQAPG…VSVMEKGLLG (80 aa)) form a c region.

This sequence belongs to the heat shock protein 90 family. In terms of assembly, homodimer.

It localises to the cytoplasm. In terms of biological role, molecular chaperone. Has ATPase activity. In Paramagnetospirillum magneticum (strain ATCC 700264 / AMB-1) (Magnetospirillum magneticum), this protein is Chaperone protein HtpG.